The primary structure comprises 1795 residues: Protein TIC 214 (1795 aa).

6 helical membrane-spanning segments follow: residues 19-39, 68-88, 91-111, 133-153, 176-196, and 227-247; these read IINS…FSIG, FIAG…HLAL, PHTI…WNNH, VFLN…SSML, VGWL…LVWI, and IFSI…PSPI. The segment at 1490–1517 is disordered; that stretch reads EKESTGQVEFESDKEQQRNSESALSNQE. Residues 1508–1517 show a composition bias toward polar residues; it reads NSESALSNQE.

This sequence belongs to the TIC214 family. Part of the Tic complex.

Its subcellular location is the plastid. The protein resides in the chloroplast inner membrane. Functionally, involved in protein precursor import into chloroplasts. May be part of an intermediate translocation complex acting as a protein-conducting channel at the inner envelope. The polypeptide is Protein TIC 214 (Crucihimalaya wallichii (Rock-cress)).